The following is a 148-amino-acid chain: 3-hydroxyacyl-[acyl-carrier-protein] dehydratase FabZ (148 aa).

Residue His55 is part of the active site.

Belongs to the thioester dehydratase family. FabZ subfamily.

Its subcellular location is the cytoplasm. The enzyme catalyses a (3R)-hydroxyacyl-[ACP] = a (2E)-enoyl-[ACP] + H2O. Its function is as follows. Involved in unsaturated fatty acids biosynthesis. Catalyzes the dehydration of short chain beta-hydroxyacyl-ACPs and long chain saturated and unsaturated beta-hydroxyacyl-ACPs. This Haemophilus influenzae (strain ATCC 51907 / DSM 11121 / KW20 / Rd) protein is 3-hydroxyacyl-[acyl-carrier-protein] dehydratase FabZ.